The primary structure comprises 256 residues: Eukaryotic translation initiation factor 3 subunit J (256 aa).

Positions 1-67 (MAAAAAGDSD…KEEAEVKPEV (67 aa)) are sufficient for interaction with EIF3B. A disordered region spans residues 1-106 (MAAAAAGDSD…LEEPEEPKVL (106 aa)). Phosphoserine is present on residues serine 9, serine 11, and serine 18. A compositionally biased stretch (acidic residues) spans 38 to 57 (EGEDEDEDVKDNWDDDDDEK). A compositionally biased stretch (basic and acidic residues) spans 58-104 (KEEAEVKPEVKISEKKKIAEKIKEKERQQKKRQEEIKKRLEEPEEPK). Positions 68 to 133 (KISEKKKIAE…ESDLELAKET (66 aa)) form a coiled coil. Residue lysine 104 forms a Glycyl lysine isopeptide (Lys-Gly) (interchain with G-Cter in SUMO2) linkage. Residue threonine 107 is modified to Phosphothreonine. Serine 125 carries the phosphoserine modification. The interval 214–243 (QSKAKKKKKGVVPGGGLKATMKDDLADYGG) is disordered. The promotes stable association with the 40S ribosome stretch occupies residues 241 to 256 (YGGYDGGYAQDYEDFM). Position 252 is a phosphotyrosine (tyrosine 252).

The protein belongs to the eIF-3 subunit J family. Component of the eukaryotic translation initiation factor 3 (eIF-3) complex, which is composed of 13 subunits: EIF3A, EIF3B, EIF3C, EIF3D, EIF3E, EIF3F, EIF3G, EIF3H, EIF3I, EIF3J, EIF3K, EIF3L and EIF3M. The eIF-3 complex appears to include 3 stable modules: module A is composed of EIF3A, EIF3B, EIF3G and EIF3I; module B is composed of EIF3F, EIF3H, and EIF3M; and module C is composed of EIF3C, EIF3D, EIF3E, EIF3K and EIF3L. EIF3C of module C binds EIF3B of module A and EIF3H of module B, thereby linking the three modules. EIF3J is a labile subunit that binds to the eIF-3 complex via EIF3B. The eIF-3 complex interacts with RPS6KB1 under conditions of nutrient depletion. Mitogenic stimulation leads to binding and activation of a complex composed of MTOR and RPTOR, leading to phosphorylation and release of RPS6KB1 and binding of EIF4B to eIF-3. Phosphorylated. Phosphorylation is enhanced upon serum stimulation.

Its subcellular location is the cytoplasm. Its function is as follows. Component of the eukaryotic translation initiation factor 3 (eIF-3) complex, which is required for several steps in the initiation of protein synthesis. The eIF-3 complex associates with the 40S ribosome and facilitates the recruitment of eIF-1, eIF-1A, eIF-2:GTP:methionyl-tRNAi and eIF-5 to form the 43S pre-initiation complex (43S PIC). The eIF-3 complex stimulates mRNA recruitment to the 43S PIC and scanning of the mRNA for AUG recognition. The eIF-3 complex is also required for disassembly and recycling of post-termination ribosomal complexes and subsequently prevents premature joining of the 40S and 60S ribosomal subunits prior to initiation. The eIF-3 complex specifically targets and initiates translation of a subset of mRNAs involved in cell proliferation, including cell cycling, differentiation and apoptosis, and uses different modes of RNA stem-loop binding to exert either translational activation or repression. This subunit binds directly within the mRNA entry channel of the 40S ribosome to the aminoacyl (A) site. It may regulate the interaction between the 43S PIC and mRNA. This Bos taurus (Bovine) protein is Eukaryotic translation initiation factor 3 subunit J.